A 1342-amino-acid polypeptide reads, in one-letter code: MAYSYSEKKRIRKSFGKRPQVLNVPYLLTIQLDSYEKFIQRDSDGQQGLEAAFRSVFPIVSNNGSTELQYVSYELGEPVFDVRECQIRGTTYAAPLRVKLRLVTFDREAAAGTVKDIKEQNVYMGEIPLMTDNGTFVINGTERVIVSQLHRSPGVFFDSDKGKTHSSGKVLYNARIIPYRGSWLDFEFDPKDNLYARIDRRRKLPATIILRALGYTTEEILSMFFDKVNFEIQDNKLLMTLVPERLRGETAAFDIEANGKVYVERGRRITARHIRTLEKDEIKQIEVPVEYIVGKVAAKDYVDLSTGELVCPANMEISMEMLAKLSQAGYKEIEVLFTNDLDHGPYISETLRVDPTYDRLSALVEIYRMMRPGEPPTKEAAEALFDNMFFSADRYDLSAVGRMKFNRSLNLEEGVGSGILSNDDITGVMKKLIEIRNGRGEVDDIDHLGNRRIRSVGEMAENQFRIGLVRVERAVRERLSLGDLDGITPQDLINAKPISAAVKEFFGSSQLSQFMDQNNPLSEVTHKRRISALGPGGLTRERAGFEVRDVHTTHYGRLCPIETPEGPNIGLINSLSVYARTNNYGFLETPFRKVVNGQVTEDIEYLSAIEEGNYVIAQANSNLDENFRFTDTYVTCRGEHGESGLYKPEDIHYMDISTQQVVSVAAALIPFLEHDDANRALMGANMQRQAVPTLRADKPLVGTGMEKPIALDSGVAIVAKRGGIVQRVDASRIVVKVNEDETIPGEAGIDIYNLIKYTRSNQNTCINQIPCVNLGEPVARGEILADGPSTDLGELALGQNIRVAFMPWNGYNFEDSMLVSERVVQEDRFTTIHIQELSCVARDTKLGAEEITADIPNVGESALSKLDESGIVYVGAEVKGGDILVGKVTPKGETQLTPEEKLLRAIFGEKASDVKDSSLRVPNGTSGTVIDVQVFTRDGVEKDKRALEIEEMQLKEAKKDLTEELEILEAGLFTRVRNLLIEGGVSEAELDKVAREKWLEQTLDDEAKQNQLEQLAEQHEELRKEFERKLEIKRNKIIQGDDLAPGVLKVVKVYLAVRRQIQPGDKMAGRHGNKGVISKINPVEDMPYDENGQPVEIVLNPLGVPSRMNIGQILETHLGLAAKGIGDQINAMIKQQQSVAKLREYIQKAYDLGHGSQSVDLSTFTDEEVMRLAENLRKGLPLATPVFDGAHESEIKGLLELGDLPTSGQITLFDGRTGEKFERPVTVGYMYMLKLNHLVDDKMHARSTGSYSLVTQQPLGGKAQFGGQRFGEMEVWALEAYGAAYTLQEMLTVKSDDVNGRTKMYKNIVDGTHQMEPGMPESFNVLLKEIRALGIDMELDEE.

It belongs to the RNA polymerase beta chain family. The RNAP catalytic core consists of 2 alpha, 1 beta, 1 beta' and 1 omega subunit. When a sigma factor is associated with the core the holoenzyme is formed, which can initiate transcription.

The catalysed reaction is RNA(n) + a ribonucleoside 5'-triphosphate = RNA(n+1) + diphosphate. DNA-dependent RNA polymerase catalyzes the transcription of DNA into RNA using the four ribonucleoside triphosphates as substrates. This is DNA-directed RNA polymerase subunit beta from Actinobacillus pleuropneumoniae serotype 3 (strain JL03).